Reading from the N-terminus, the 397-residue chain is L-cysteine desulfidase (397 aa).

Residue Cys-23 is the Proton acceptor of the active site. Residues Cys-288, Cys-330, and Cys-337 each coordinate [4Fe-4S] cluster.

The protein belongs to the L-cysteine desulfidase family. In terms of assembly, homotrimer. [4Fe-4S] cluster serves as cofactor.

It carries out the reaction L-cysteine + H2O = hydrogen sulfide + pyruvate + NH4(+) + H(+). Catalyzes the cleavage of L-cysteine to form 2-aminoprop-2-enoate and sulfide. The former then spontaneously hydrolyzes to pyruvate and NH(3). May be responsible for the production of sulfide required for the biosynthesis of iron-sulfur centers in this archaea. This chain is L-cysteine desulfidase, found in Methanococcus maripaludis (strain C5 / ATCC BAA-1333).